Reading from the N-terminus, the 493-residue chain is Proline--tRNA ligase (493 aa).

Belongs to the class-II aminoacyl-tRNA synthetase family. ProS type 3 subfamily. Homodimer.

The protein localises to the cytoplasm. It catalyses the reaction tRNA(Pro) + L-proline + ATP = L-prolyl-tRNA(Pro) + AMP + diphosphate. Catalyzes the attachment of proline to tRNA(Pro) in a two-step reaction: proline is first activated by ATP to form Pro-AMP and then transferred to the acceptor end of tRNA(Pro). The sequence is that of Proline--tRNA ligase from Porphyromonas gingivalis (strain ATCC 33277 / DSM 20709 / CIP 103683 / JCM 12257 / NCTC 11834 / 2561).